Here is a 311-residue protein sequence, read N- to C-terminus: Phospho-N-acetylmuramoyl-pentapeptide-transferase (311 aa).

10 consecutive transmembrane segments (helical) span residues 2-22 (ENNV…IEGF), 48-68 (GTPT…LLNF), 74-94 (SFLI…DDFM), 104-124 (ITAV…VYFI), 144-164 (LGWF…NAVN), 168-188 (GVDG…LIVG), 192-212 (VVYL…WHPA), 214-234 (IFMG…SFAL), 237-257 (LELF…SVII), and 288-308 (KIAF…IIGW).

This sequence belongs to the glycosyltransferase 4 family. MraY subfamily. Mg(2+) is required as a cofactor.

It is found in the cell inner membrane. It carries out the reaction UDP-N-acetyl-alpha-D-muramoyl-L-alanyl-gamma-D-glutamyl-meso-2,6-diaminopimeloyl-D-alanyl-D-alanine + di-trans,octa-cis-undecaprenyl phosphate = di-trans,octa-cis-undecaprenyl diphospho-N-acetyl-alpha-D-muramoyl-L-alanyl-D-glutamyl-meso-2,6-diaminopimeloyl-D-alanyl-D-alanine + UMP. Its pathway is cell wall biogenesis; peptidoglycan biosynthesis. Catalyzes the initial step of the lipid cycle reactions in the biosynthesis of the cell wall peptidoglycan: transfers peptidoglycan precursor phospho-MurNAc-pentapeptide from UDP-MurNAc-pentapeptide onto the lipid carrier undecaprenyl phosphate, yielding undecaprenyl-pyrophosphoryl-MurNAc-pentapeptide, known as lipid I. This is Phospho-N-acetylmuramoyl-pentapeptide-transferase from Kosmotoga olearia (strain ATCC BAA-1733 / DSM 21960 / TBF 19.5.1).